The sequence spans 751 residues: Putative tyrosine-protein kinase EpsB (751 aa).

Residues 1 to 31 (MTQNLSQPPAVNAPESELDLVRYLDVLVANR) lie on the Cytoplasmic side of the membrane. The chain crosses the membrane as a helical span at residues 32 to 52 (WLIAGIAAVVMLLGATYAFLA). At 53–444 (RPVYEADVLV…VPEEPVKPKK (392 aa)) the chain is on the periplasmic side. Residues 445-465 (LTVTALAGVLGVVLGVVAAFV) traverse the membrane as a helical segment. The Cytoplasmic segment spans residues 466–751 (RNTLFGGITE…PSAEAEAESA (286 aa)).

Belongs to the etk/wzc family.

It localises to the cell inner membrane. The enzyme catalyses L-tyrosyl-[protein] + ATP = O-phospho-L-tyrosyl-[protein] + ADP + H(+). Its function is as follows. Probably involved in polymerization and/or export of exopolysaccharide EPS I which functions as a virulence factor. May be involved in an ATP-dependent process in the pathway for EPS I production, possibly export of the trimeric repeat units across the inner membrane or their polymerization. The polypeptide is Putative tyrosine-protein kinase EpsB (epsB) (Ralstonia nicotianae (strain ATCC BAA-1114 / GMI1000) (Ralstonia solanacearum)).